Reading from the N-terminus, the 379-residue chain is Chaperone protein DnaJ (379 aa).

The 66-residue stretch at 5 to 70 folds into the J domain; that stretch reads DYYEILGVPK…QKRAAYDQYG (66 aa). The CR-type zinc-finger motif lies at 134–212; it reads GVTKEIRIPT…CHGHGRIEKT (79 aa). Zn(2+) contacts are provided by Cys147, Cys150, Cys164, Cys167, Cys186, Cys189, Cys200, and Cys203. CXXCXGXG motif repeat units follow at residues 147 to 154, 164 to 171, 186 to 193, and 200 to 207; these read CEVCHGSG, CPTCHGAG, CPHCQGRG, and CNSCHGHG.

The protein belongs to the DnaJ family. Homodimer. Requires Zn(2+) as cofactor.

The protein localises to the cytoplasm. In terms of biological role, participates actively in the response to hyperosmotic and heat shock by preventing the aggregation of stress-denatured proteins and by disaggregating proteins, also in an autonomous, DnaK-independent fashion. Unfolded proteins bind initially to DnaJ; upon interaction with the DnaJ-bound protein, DnaK hydrolyzes its bound ATP, resulting in the formation of a stable complex. GrpE releases ADP from DnaK; ATP binding to DnaK triggers the release of the substrate protein, thus completing the reaction cycle. Several rounds of ATP-dependent interactions between DnaJ, DnaK and GrpE are required for fully efficient folding. Also involved, together with DnaK and GrpE, in the DNA replication of plasmids through activation of initiation proteins. The polypeptide is Chaperone protein DnaJ (Cronobacter sakazakii (strain ATCC BAA-894) (Enterobacter sakazakii)).